The sequence spans 370 residues: Nematocyst expressed protein 4 (370 aa).

Residues 1 to 19 (MAWTLVLLVLLGTSSCLDA) form the signal peptide. Residues 34-55 (SGSGSGEEGSSGSGSAPEPVRD) form a disordered region. Over residues 36 to 45 (SGSGEEGSSG) the composition is skewed to gly residues. 3 ShKT domains span residues 70-102 (CLDKGENCTGDPEQCQENWQEMVVQCPFSCRFC), 113-149 (CTDARGAACKDWADNRNDCLRFPQFMSTECTKSCKLC), and 155-190 (GKKFDKDVRCIEWAKNGYCNEGELYKEKCPHNCEVH). Disulfide bonds link cysteine 70-cysteine 102, cysteine 77-cysteine 95, cysteine 84-cysteine 99, cysteine 113-cysteine 149, cysteine 121-cysteine 142, cysteine 131-cysteine 146, cysteine 164-cysteine 183, and cysteine 173-cysteine 187. Residues 306 to 340 (PYPPPPPPYPEQVPPPPPPPPPPPPPPPYPYPYPY) are compositionally biased toward pro residues. The segment at 306–370 (PYPPPPPPYP…HHKENHSKKS (65 aa)) is disordered. Basic residues predominate over residues 349-370 (HKSKKHAKHHEKHHKENHSKKS).

It belongs to the NEP3 family. Nematocytes. In late planulae, transcripts are found throughout the ectoderm in nematocytes, with high concentration of expressing cells in the oral pole. In primary polyps, is expressed in nematocytes in the body wall and physa ectoderm and in the upper and lower pharynx.

Its subcellular location is the nematocyst. It localises to the secreted. In Nematostella vectensis (Starlet sea anemone), this protein is Nematocyst expressed protein 4.